Reading from the N-terminus, the 154-residue chain is Iron sulfur cluster assembly protein 1, mitochondrial (154 aa).

The protein belongs to the NifU family. Component of the core Fe-S cluster (ISC) assembly machinery. [2Fe-2S] cluster is required as a cofactor.

It is found in the mitochondrion matrix. It participates in cofactor biosynthesis; iron-sulfur cluster biosynthesis. In terms of biological role, scaffold protein for the de novo synthesis of iron-sulfur (Fe-S) clusters within mitochondria, which is required for maturation of both mitochondrial and cytoplasmic [2Fe-2S] and [4Fe-4S] proteins. First, a [2Fe-2S] cluster is transiently assembled on the scaffold protein ISU1. In a second step, the cluster is released from ISU1, transferred to a glutaredoxin, followed by the formation of mitochondrial [2Fe-2S] proteins, the synthesis of [4Fe-4S] clusters and their target-specific insertion into the recipient apoproteins. Cluster assembly on ISU1 depends on the function of the cysteine desulfurase complex NFS1-ISD11, which serves as the sulfur donor for cluster synthesis, the iron-binding protein frataxin as the putative iron donor, and the electron transfer chain comprised of ferredoxin reductase and ferredoxin, which receive their electrons from NADH. This is Iron sulfur cluster assembly protein 1, mitochondrial (ISU1) from Eremothecium gossypii (strain ATCC 10895 / CBS 109.51 / FGSC 9923 / NRRL Y-1056) (Yeast).